The primary structure comprises 527 residues: Peptide chain release factor 3 (527 aa).

The tr-type G domain occupies 9–277 (AKRRTFAIIS…AVVNWAPKPL (269 aa)). Residues 18-25 (SHPDAGKT), 86-90 (DTPGH), and 140-143 (NKLD) contribute to the GTP site.

Belongs to the TRAFAC class translation factor GTPase superfamily. Classic translation factor GTPase family. PrfC subfamily.

The protein resides in the cytoplasm. Increases the formation of ribosomal termination complexes and stimulates activities of RF-1 and RF-2. It binds guanine nucleotides and has strong preference for UGA stop codons. It may interact directly with the ribosome. The stimulation of RF-1 and RF-2 is significantly reduced by GTP and GDP, but not by GMP. The polypeptide is Peptide chain release factor 3 (Pseudomonas syringae pv. syringae (strain B728a)).